We begin with the raw amino-acid sequence, 108 residues long: Thioredoxin C-2 (108 aa).

Residues 2–108 (SATIVNTTDE…KLAAFIDQNI (107 aa)) enclose the Thioredoxin domain. A disulfide bridge links C33 with C36.

This sequence belongs to the thioredoxin family.

Participates in various redox reactions through the reversible oxidation of its active center dithiol to a disulfide and catalyzes dithiol-disulfide exchange reactions. The chain is Thioredoxin C-2 from Corynebacterium nephridii.